Here is a 1216-residue protein sequence, read N- to C-terminus: DNA-directed RNA polymerase subunit beta' (1216 aa).

The Zn(2+) site is built by cysteine 60, cysteine 62, cysteine 75, and cysteine 78. The Mg(2+) site is built by aspartate 450, aspartate 452, and aspartate 454. Cysteine 819, cysteine 893, cysteine 900, and cysteine 903 together coordinate Zn(2+).

The protein belongs to the RNA polymerase beta' chain family. In terms of assembly, the RNAP catalytic core consists of 2 alpha, 1 beta, 1 beta' and 1 omega subunit. When a sigma factor is associated with the core the holoenzyme is formed, which can initiate transcription. Mg(2+) is required as a cofactor. It depends on Zn(2+) as a cofactor.

The enzyme catalyses RNA(n) + a ribonucleoside 5'-triphosphate = RNA(n+1) + diphosphate. Its function is as follows. DNA-dependent RNA polymerase catalyzes the transcription of DNA into RNA using the four ribonucleoside triphosphates as substrates. The sequence is that of DNA-directed RNA polymerase subunit beta' from Streptococcus agalactiae serotype Ia (strain ATCC 27591 / A909 / CDC SS700).